The following is an 890-amino-acid chain: MNYVGQLAGQVFVTVKELYKGLNPATLSGCIDIIVIRQPNGNLQCSPFHVRFGKMGVLRSREKVVDIEINGESVDLHMKLGDNGEAFFVQETDNDQEVIPMHLATSPILSEGASRMECQLKRGSVDRMRGLDPSTPAQVIAPSETPSSSSVVKKRRKRRRKSQLDSLKRDDNMNTSEDEDMFPIEMSSDEAMELLESSRTLPNDIPPFQDDIPEENLSLAVIYPQSASYPNSDREWSPTPSPSGSRPSTPKSDSELVSKSTERTGQKNPEMLWLWGELPQAAKSSSPHKMKESSPLSSRKICDKSHFQAIHSESSDTFSDQSPTLVGGALLDQNKPQTEMQFVNEEDLETLGAAAPLLPMIEELKPPSASVVQTANKTDSPSRKRDKRSRHLGADGVYLDDLTDMDPEVAALYFPKNGDPSGLAKHASDNGARSANQSPQSVGSSGVDSGVESTSDGLRDLPSIAISLCGGLSDHREITKDAFLEQAVSYQQFVDNPAIIDDPNLVVKIGSKYYNWTTAAPLLLAMQAFQKPLPKATVESIMRDKMPKKGGRWWFSWRGRNTTIKEESKPEQCLAGKAHSTGEQPPQLSLATRVKHESSSSDEERAAAKPSNAGHLPLLPNVSYKKTLRLTSEQLKSLKLKNGPNDVVFSVTTQYQGTCRCEGTIYLWNWDDKVIISDIDGTITRSDTLGHILPTLGKDWTHQGIAKLYHKVSQNGYKFLYCSARAIGMADMTRGYLHWVNERGTVLPQGPLLLSPSSLFSALHREVIEKKPEKFKVQCLTDIKNLFFPNTEPFYAAFGNRPADVYSYKQVGVSLNRIFTVNPKGELVQEHAKTNISSYVRLCEVVDHVFPLLKRSHSSDFPCSDTFSNFTFWREPLPPFENQDIHSASA.

The N-LIP stretch occupies residues 1-108 (MNYVGQLAGQ…IPMHLATSPI (108 aa)). Phosphoserine occurs at positions 106 and 150. Disordered regions lie at residues 125–183 (VDRM…DMFP), 228–300 (SYPN…SSRK), 365–392 (KPPSASVVQTANKTDSPSRKRDKRSRHL), and 421–456 (SGLAKHASDNGARSANQSPQSVGSSGVDSGVESTSD). The segment covering 152–161 (VKKRRKRRRK) has biased composition (basic residues). Positions 153–158 (KKRRKR) match the Nuclear localization signal motif. 2 stretches are compositionally biased toward basic and acidic residues: residues 162 to 172 (SQLDSLKRDDN) and 252 to 265 (SDSELVSKSTERTG). Ser-252, Ser-254, and Ser-260 each carry phosphoserine. The residue at position 264 (Thr-264) is a Phosphothreonine. Residue Ser-294 is modified to Phosphoserine. N6-acetyllysine is present on Lys-425. Over residues 431 to 440 (GARSANQSPQ) the composition is skewed to polar residues. Ser-434, Ser-438, and Ser-449 each carry phosphoserine. Low complexity predominate over residues 441 to 456 (SVGSSGVDSGVESTSD). Residue Lys-565 forms a Glycyl lysine isopeptide (Lys-Gly) (interchain with G-Cter in SUMO) linkage. A disordered region spans residues 566 to 616 (EESKPEQCLAGKAHSTGEQPPQLSLATRVKHESSSSDEERAAAKPSNAGHL). Residues 581–590 (TGEQPPQLSL) are compositionally biased toward polar residues. A compositionally biased stretch (basic and acidic residues) spans 594–607 (VKHESSSSDEERAA). At Lys-595 the chain carries N6-acetyllysine. Lys-595 participates in a covalent cross-link: Glycyl lysine isopeptide (Lys-Gly) (interchain with G-Cter in SUMO). 2 positions are modified to phosphoserine: Ser-600 and Ser-601. The C-LIP stretch occupies residues 624-830 (YKKTLRLTSE…VNPKGELVQE (207 aa)). The short motif at 678–682 (DIDGT) is the DXDXT motif element. The short motif at 689 to 693 (LGHIL) is the LXXIL motif element. Ser-887 and Ser-889 each carry phosphoserine.

The protein belongs to the lipin family. As to quaternary structure, interacts (via LXXIL motif) with PPARA. Interacts with PPARGC1A. Interaction with PPARA and PPARGC1A leads to the formation of a complex that modulates gene transcription. Interacts with MEF2C. Mg(2+) serves as cofactor. It depends on Mn(2+) as a cofactor. Phosphorylated at multiple sites by mTOR in response to insulin, leading to its inactivation. Phosphorylation does not affect the catalytic activity but regulates the localization. Phosphorylation is decreased by epinephrine. Dephosphorylated by the CTDNEP1-CNEP1R1 complex. Dephosphorylation following mTOR inhibition promotes its activity. Post-translationally, acetylation at Lys-425 and Lys-595 by KAT5 in response to fatty acids promotes translocation to the endoplasmic reticulum and synthesis of diacylglycerol. In terms of processing, sumoylated. Specifically expressed in skeletal muscle. Also abundant in adipose tissue. Lower levels in some portions of the digestive tract.

The protein resides in the cytoplasm. It is found in the cytosol. It localises to the endoplasmic reticulum membrane. The protein localises to the nucleus membrane. It catalyses the reaction a 1,2-diacyl-sn-glycero-3-phosphate + H2O = a 1,2-diacyl-sn-glycerol + phosphate. The enzyme catalyses 1-octadecanoyl-2-(4Z,7Z,10Z,13Z,16Z,19Z-docosahexaenoyl)-sn-glycero-3-phosphate + H2O = 1-octadecanoyl-2-(4Z,7Z,10Z,13Z,16Z,19Z-docosahexaenoyl)-sn-glycerol + phosphate. The catalysed reaction is 1-octadecanoyl-2-(5Z,8Z,11Z,14Z-eicosatetraenoyl)-sn-glycero-3-phosphate + H2O = 1-octadecanoyl-2-(5Z,8Z,11Z,14Z-eicosatetraenoyl)-sn-glycerol + phosphate. It carries out the reaction 1-octadecanoyl-2-(9Z,12Z-octadecadienoyl)-sn-glycero-3-phosphate + H2O = 1-octadecanoyl-2-(9Z,12Z)-octadecadienoyl-sn-glycerol + phosphate. It catalyses the reaction 1-octadecanoyl-2-(9Z-octadecenoyl)-sn-glycero-3-phosphate + H2O = 1-octadecanoyl-2-(9Z-octadecenoyl)-sn-glycerol + phosphate. The enzyme catalyses 1-hexadecanoyl-2-(4Z,7Z,10Z,13Z,16Z,19Z-docosahexaenoyl)-sn-glycero-3-phosphate + H2O = 1-hexadecanoyl-2-(4Z,7Z,10Z,13Z,16Z,19Z-docosahexaenoyl)-sn-glycerol + phosphate. The catalysed reaction is 1,2-dioctadecanoyl-sn-glycero-3-phosphate + H2O = 1,2-dioctadecanoyl-sn-glycerol + phosphate. It carries out the reaction 1-hexadecanoyl-2-(5Z,8Z,11Z,14Z-eicosatetraenoyl)-sn-glycero-3-phosphate + H2O = 1-hexadecanoyl-2-(5Z,8Z,11Z,14Z-eicosatetraenoyl)-sn-glycerol + phosphate. It catalyses the reaction 1-hexadecanoyl-2-(9Z,12Z-octadecadienoyl)-sn-glycero-3-phosphate + H2O = 1-hexadecanoyl-2-(9Z,12Z-octadecadienoyl)-sn-glycerol + phosphate. The enzyme catalyses 1-hexadecanoyl-2-(9Z-octadecenoyl)-sn-glycero-3-phosphate + H2O = 1-hexadecanoyl-2-(9Z-octadecenoyl)-sn-glycerol + phosphate. The catalysed reaction is 1,2-di-(4Z,7Z,10Z,13Z,16Z,19Z-docosahexaenoyl)-sn-glycero-3-phosphate + H2O = 1,2-di-(4Z,7Z,10Z,13Z,16Z,19Z-docosahexaenoyl)-sn-glycerol + phosphate. It carries out the reaction 1,2-di-(5Z,8Z,11Z,14Z)-eicosatetraenoyl-sn-glycero-3-phosphate + H2O = 1,2-di-(5Z,8Z,11Z,14Z)-eicosatetraenoyl-sn-glycerol + phosphate. It catalyses the reaction 1,2-di-(9Z,12Z-octadecadienoyl)-sn-glycero-3-phosphate + H2O = 1,2-di-(9Z,12Z-octadecadienoyl)-sn-glycerol + phosphate. The enzyme catalyses 1,2-di-(9Z-octadecenoyl)-sn-glycero-3-phosphate + H2O = 1,2-di-(9Z-octadecenoyl)-sn-glycerol + phosphate. The catalysed reaction is 1,2-dihexadecanoyl-sn-glycero-3-phosphate + H2O = 1,2-dihexadecanoyl-sn-glycerol + phosphate. Its activity is regulated as follows. Potently inhibited by sphingolipids, in particular, the sphingoid bases sphinganine and sphingosine and ceramide-1-phosphate. Inhibited by concentrations of Mg(2+) and Mn(2+) above their optimums and by Ca(2+), Zn(2+), N-ethylmaleimide and propranolol. Sertraline and propanolol inhibit activity in dose-dependent manners with IC(50) values of 103 uM and 226 uM, respectively. With respect to regulation, sertraline and propanolol inhibit activity in dose-dependent manners with IC(50) values of 108 uM and 271 uM, respectively. Its activity is regulated as follows. Sertraline and propanolol inhibit activity in dose-dependent manners with IC(50) values of 143 uM and 227 uM, respectively. In terms of biological role, acts as a magnesium-dependent phosphatidate phosphatase enzyme which catalyzes the conversion of phosphatidic acid to diacylglycerol during triglyceride, phosphatidylcholine and phosphatidylethanolamine biosynthesis and therefore controls the metabolism of fatty acids at different levels. Is involved in adipocyte differentiation. Recruited at the mitochondrion outer membrane and is involved in mitochondrial fission by converting phosphatidic acid to diacylglycerol. Acts also as nuclear transcriptional coactivator for PPARGC1A/PPARA regulatory pathway to modulate lipid metabolism gene expression. This chain is Phosphatidate phosphatase LPIN1, found in Homo sapiens (Human).